The chain runs to 140 residues: Small ribosomal subunit protein uS12 (140 aa).

2 disordered regions span residues Thr-36–Lys-56 and Thr-117–Glu-140.

The protein belongs to the universal ribosomal protein uS12 family. As to quaternary structure, part of the 30S ribosomal subunit. Contacts proteins S8 and S17. May interact with IF1 in the 30S initiation complex.

In terms of biological role, with S4 and S5 plays an important role in translational accuracy. Interacts with and stabilizes bases of the 16S rRNA that are involved in tRNA selection in the A site and with the mRNA backbone. Located at the interface of the 30S and 50S subunits, it traverses the body of the 30S subunit contacting proteins on the other side and probably holding the rRNA structure together. The combined cluster of proteins S8, S12 and S17 appears to hold together the shoulder and platform of the 30S subunit. The chain is Small ribosomal subunit protein uS12 from Malacoplasma penetrans (strain HF-2) (Mycoplasma penetrans).